The sequence spans 303 residues: Cobalamin biosynthesis protein CobD (303 aa).

Helical transmembrane passes span 65–85 (LLAWLLSLLPGIGWLAEIVLL), 147–167 (DAVFAALFWFIVAGAPGVVLY), 235–255 (AGPVMAAGAGALGVVLGGAAI), and 283–303 (LVWAGVGVWLLVLLFGGWLYA).

This sequence belongs to the CobD/CbiB family.

Its subcellular location is the cell membrane. The protein operates within cofactor biosynthesis; adenosylcobalamin biosynthesis. Converts cobyric acid to cobinamide by the addition of aminopropanol on the F carboxylic group. This Stutzerimonas stutzeri (strain A1501) (Pseudomonas stutzeri) protein is Cobalamin biosynthesis protein CobD.